A 106-amino-acid chain; its full sequence is Large ribosomal subunit protein uL24 (106 aa).

It belongs to the universal ribosomal protein uL24 family. In terms of assembly, part of the 50S ribosomal subunit.

Its function is as follows. One of two assembly initiator proteins, it binds directly to the 5'-end of the 23S rRNA, where it nucleates assembly of the 50S subunit. One of the proteins that surrounds the polypeptide exit tunnel on the outside of the subunit. This is Large ribosomal subunit protein uL24 from Polaromonas sp. (strain JS666 / ATCC BAA-500).